A 206-amino-acid polypeptide reads, in one-letter code: Macrophage immunometabolism regulator (206 aa).

Met1 carries the post-translational modification N-acetylmethionine. The tract at residues 1-41 is disordered; it reads MEVDINGESRSTLTTLPFPGAEANSPGKAEAEKPRCSSTPC. Phosphoserine occurs at positions 25, 140, and 167.

It belongs to the UNC119-binding protein family. In terms of assembly, interacts with UNC119 and UNC119B; interaction preferentially takes place when UNC119 and UNC119B are unliganded with myristoylated proteins.

It is found in the cytoplasm. Its subcellular location is the cell projection. It localises to the cilium. Its function is as follows. Regulates the macrophage function, by enhancing the resolution of inflammation and wound repair functions mediated by M2 macrophages. The regulation of macrophage function is, due at least in part, to its ability to inhibit glycolysis. May also play a role in trafficking of proteins via its interaction with UNC119 and UNC119B cargo adapters: may help the release of UNC119 and UNC119B cargo or the recycling of UNC119 and UNC119B. May play a role in ciliary membrane localization via its interaction with UNC119B and protein transport into photoreceptor cells. The protein is Macrophage immunometabolism regulator (MACIR) of Pongo abelii (Sumatran orangutan).